Consider the following 344-residue polypeptide: Holliday junction branch migration complex subunit RuvB (344 aa).

Residues 1-182 (MRIELLNTPV…FGISNRFDYY (182 aa)) form a large ATPase domain (RuvB-L) region. ATP contacts are provided by residues Ile21, Arg22, Gly63, Lys66, Thr67, Thr68, 129–131 (EDF), Arg172, Tyr182, and Arg219. Thr67 serves as a coordination point for Mg(2+). A small ATPAse domain (RuvB-S) region spans residues 183 to 253 (PPELLETILM…TAMKTLDSLE (71 aa)). Positions 256 to 344 (EEGLDEMDKK…GTLFDGQEHV (89 aa)) are head domain (RuvB-H). Residues Arg311 and Arg316 each contribute to the DNA site.

The protein belongs to the RuvB family. In terms of assembly, homohexamer. Forms an RuvA(8)-RuvB(12)-Holliday junction (HJ) complex. HJ DNA is sandwiched between 2 RuvA tetramers; dsDNA enters through RuvA and exits via RuvB. An RuvB hexamer assembles on each DNA strand where it exits the tetramer. Each RuvB hexamer is contacted by two RuvA subunits (via domain III) on 2 adjacent RuvB subunits; this complex drives branch migration. In the full resolvosome a probable DNA-RuvA(4)-RuvB(12)-RuvC(2) complex forms which resolves the HJ.

It localises to the cytoplasm. The enzyme catalyses ATP + H2O = ADP + phosphate + H(+). The RuvA-RuvB-RuvC complex processes Holliday junction (HJ) DNA during genetic recombination and DNA repair, while the RuvA-RuvB complex plays an important role in the rescue of blocked DNA replication forks via replication fork reversal (RFR). RuvA specifically binds to HJ cruciform DNA, conferring on it an open structure. The RuvB hexamer acts as an ATP-dependent pump, pulling dsDNA into and through the RuvAB complex. RuvB forms 2 homohexamers on either side of HJ DNA bound by 1 or 2 RuvA tetramers; 4 subunits per hexamer contact DNA at a time. Coordinated motions by a converter formed by DNA-disengaged RuvB subunits stimulates ATP hydrolysis and nucleotide exchange. Immobilization of the converter enables RuvB to convert the ATP-contained energy into a lever motion, pulling 2 nucleotides of DNA out of the RuvA tetramer per ATP hydrolyzed, thus driving DNA branch migration. The RuvB motors rotate together with the DNA substrate, which together with the progressing nucleotide cycle form the mechanistic basis for DNA recombination by continuous HJ branch migration. Branch migration allows RuvC to scan DNA until it finds its consensus sequence, where it cleaves and resolves cruciform DNA. This is Holliday junction branch migration complex subunit RuvB from Chlorobium luteolum (strain DSM 273 / BCRC 81028 / 2530) (Pelodictyon luteolum).